The following is a 1377-amino-acid chain: DNA-directed RNA polymerase subunit beta (1377 aa).

This sequence belongs to the RNA polymerase beta chain family. In terms of assembly, the RNAP catalytic core consists of 2 alpha, 1 beta, 1 beta' and 1 omega subunit. When a sigma factor is associated with the core the holoenzyme is formed, which can initiate transcription.

The enzyme catalyses RNA(n) + a ribonucleoside 5'-triphosphate = RNA(n+1) + diphosphate. Its function is as follows. DNA-dependent RNA polymerase catalyzes the transcription of DNA into RNA using the four ribonucleoside triphosphates as substrates. This chain is DNA-directed RNA polymerase subunit beta, found in Orientia tsutsugamushi (strain Boryong) (Rickettsia tsutsugamushi).